Reading from the N-terminus, the 361-residue chain is Solute carrier family 25 member 3 (361 aa).

The transit peptide at 1–49 (MFSSVAHLARANPFNTPHLQLVHDGLGDFRSRPPGPTGQPRRPRNLAAA) directs the protein to the mitochondrion. Positions 25–44 (GLGDFRSRPPGPTGQPRRPR) are disordered. The Mitochondrial intermembrane segment spans residues 50–62 (AVEEYSCEFGSAK). Solcar repeat units lie at residues 62–146 (KYYA…FKVL), 159–243 (WRTS…TVEA), and 260–338 (EQLV…VKVY). A helical membrane pass occupies residues 63 to 85 (YYALCGFGGVLSCGLTHTAVVPL). At 86–120 (DLVKCRMQVDPQKYKGIFNGFSVTLKEDGVRGLAK) the chain is on the mitochondrial matrix side. Residue Lys98 is modified to N6-acetyllysine. Position 111 is an N6-methyllysine (Lys111). Residues 121–140 (GWAPTFLGYSMQGLCKFGFY) traverse the membrane as a helical segment. The Mitochondrial intermembrane segment spans residues 141-160 (EVFKVLYSNMLGEENTYLWR). The chain crosses the membrane as a helical span at residues 161–182 (TSLYLAASASAEFFADIALAPM). Over 183–217 (EAAKVRIQTQPGYANTLRDAAPKMYKEEGLKAFYK) the chain is Mitochondrial matrix. Tyr195 is subject to Phosphotyrosine. N6-acetyllysine is present on Lys208. A helical membrane pass occupies residues 218-237 (GVAPLWMRQIPYTMMKFACF). Over 238-260 (ERTVEALYKFVVPKPRSECSKPE) the chain is Mitochondrial intermembrane. Residues 261 to 283 (QLVVTFVAGYIAGVFCAIVSHPA) form a helical membrane-spanning segment. Residues 284 to 313 (DSVVSVLNKEKGSSASLVLKRLGFKGVWKG) are Mitochondrial matrix-facing. Residues 314–332 (LFARIIMIGTLTALQWFIY) traverse the membrane as a helical segment. At 333–361 (DSVKVYFRLPRPPPPEMPESLKKKLGLTQ) the chain is on the mitochondrial intermembrane side.

Belongs to the mitochondrial carrier (TC 2.A.29) family. Interacts with PPIF; the interaction is impaired by CsA.

The protein resides in the mitochondrion inner membrane. It catalyses the reaction phosphate(in) + H(+)(in) = phosphate(out) + H(+)(out). Inorganic ion transporter that transports phosphate or copper ions across the mitochondrial inner membrane into the matrix compartment. Mediates proton-coupled symport of phosphate ions necessary for mitochondrial oxidative phosphorylation of ADP to ATP. Transports copper ions probably in the form of anionic copper(I) complexes to maintain mitochondrial matrix copper pool and to supply copper for cytochrome C oxidase complex assembly. May also play a role in regulation of the mitochondrial permeability transition pore (mPTP). The chain is Solute carrier family 25 member 3 from Pongo abelii (Sumatran orangutan).